A 509-amino-acid polypeptide reads, in one-letter code: Cytochrome P450 6A1 (509 aa).

Heme is bound at residue Cys449.

The protein belongs to the cytochrome P450 family. Heme serves as cofactor.

It is found in the endoplasmic reticulum membrane. It localises to the microsome membrane. The enzyme catalyses an organic molecule + reduced [NADPH--hemoprotein reductase] + O2 = an alcohol + oxidized [NADPH--hemoprotein reductase] + H2O + H(+). Involved in the metabolism of insect hormones and in the breakdown of synthetic insecticides. In Musca domestica (House fly), this protein is Cytochrome P450 6A1 (CYP6A1).